The following is a 160-amino-acid chain: Xanthine-guanine phosphoribosyltransferase (160 aa).

5-phospho-alpha-D-ribose 1-diphosphate-binding positions include Arg41–Gly42 and Asp93–Thr101. Residue Asp94 coordinates Mg(2+). Guanine-binding residues include Asp97 and Ile140. The xanthine site is built by Asp97 and Ile140. GMP is bound by residues Asp97 to Thr101 and Trp139 to Ile140.

Belongs to the purine/pyrimidine phosphoribosyltransferase family. XGPT subfamily. In terms of assembly, homotetramer. Mg(2+) is required as a cofactor.

It localises to the cell inner membrane. The catalysed reaction is GMP + diphosphate = guanine + 5-phospho-alpha-D-ribose 1-diphosphate. It catalyses the reaction XMP + diphosphate = xanthine + 5-phospho-alpha-D-ribose 1-diphosphate. The enzyme catalyses IMP + diphosphate = hypoxanthine + 5-phospho-alpha-D-ribose 1-diphosphate. It functions in the pathway purine metabolism; GMP biosynthesis via salvage pathway; GMP from guanine: step 1/1. Its pathway is purine metabolism; XMP biosynthesis via salvage pathway; XMP from xanthine: step 1/1. Its function is as follows. Purine salvage pathway enzyme that catalyzes the transfer of the ribosyl-5-phosphate group from 5-phospho-alpha-D-ribose 1-diphosphate (PRPP) to the N9 position of the 6-oxopurines guanine and xanthine to form the corresponding ribonucleotides GMP (guanosine 5'-monophosphate) and XMP (xanthosine 5'-monophosphate), with the release of PPi. To a lesser extent, also acts on hypoxanthine. This chain is Xanthine-guanine phosphoribosyltransferase, found in Desulfotalea psychrophila (strain LSv54 / DSM 12343).